A 121-amino-acid chain; its full sequence is Large ribosomal subunit protein uL18 (121 aa).

Belongs to the universal ribosomal protein uL18 family. As to quaternary structure, part of the 50S ribosomal subunit; part of the 5S rRNA/L5/L18/L25 subcomplex. Contacts the 5S and 23S rRNAs.

In terms of biological role, this is one of the proteins that bind and probably mediate the attachment of the 5S RNA into the large ribosomal subunit, where it forms part of the central protuberance. In Streptococcus suis (strain 98HAH33), this protein is Large ribosomal subunit protein uL18.